The chain runs to 351 residues: Columbamine O-methyltransferase (351 aa).

The S-adenosyl-L-methionine site is built by Gly198, Asp221, Asp241, Met242, and Lys255. His259 acts as the Proton acceptor in catalysis.

It belongs to the class I-like SAM-binding methyltransferase superfamily. Cation-independent O-methyltransferase family. COMT subfamily. Homodimer.

It catalyses the reaction columbamine + S-adenosyl-L-methionine = palmatine + S-adenosyl-L-homocysteine + H(+). It carries out the reaction (S)-tetrahydrocolumbamine + S-adenosyl-L-methionine = (S)-tetrahydropalmatine + S-adenosyl-L-homocysteine + H(+). It participates in alkaloid biosynthesis; palmatine biosynthesis; palmatine from columbamine: step 1/1. In terms of biological role, catalyzes the conversion of tetrahydrocolumbamine to (S)-tetrahydropalmatine and of columbamine to palmatine, an isoquinoline alkaloid. The chain is Columbamine O-methyltransferase from Coptis japonica (Japanese goldthread).